The chain runs to 306 residues: ATP synthase F(1) complex subunit gamma, mitochondrial (306 aa).

Residues 1 to 17 (MNSASKLFVVLASPANQ) constitute a mitochondrion transit peptide.

The protein belongs to the ATPase gamma chain family. Component of the ATP synthase complex composed at least of ATP5F1A/subunit alpha, ATP5F1B/subunit beta, ATP5MC1/subunit c (homooctomer), MT-ATP6/subunit a, MT-ATP8/subunit 8, ATP5ME/subunit e, ATP5MF/subunit f, ATP5MG/subunit g, ATP5MK/subunit k, ATP5MJ/subunit j, ATP5F1C/subunit gamma, ATP5F1D/subunit delta, ATP5F1E/subunit epsilon, ATP5PF/subunit F6, ATP5PB/subunit b, ATP5PD/subunit d, ATP5PO/subunit OSCP. ATP synthase complex consists of a soluble F(1) head domain (subunits alpha(3) and beta(3)) - the catalytic core - and a membrane F(0) domain - the membrane proton channel (subunits c, a, 8, e, f, g, k and j). These two domains are linked by a central stalk (subunits gamma, delta, and epsilon) rotating inside the F1 region and a stationary peripheral stalk (subunits F6, b, d, and OSCP).

It is found in the mitochondrion inner membrane. In terms of biological role, subunit gamma, of the mitochondrial membrane ATP synthase complex (F(1)F(0) ATP synthase or Complex V) that produces ATP from ADP in the presence of a proton gradient across the membrane which is generated by electron transport complexes of the respiratory chain. ATP synthase complex consist of a soluble F(1) head domain - the catalytic core - and a membrane F(1) domain - the membrane proton channel. These two domains are linked by a central stalk rotating inside the F(1) region and a stationary peripheral stalk. During catalysis, ATP synthesis in the catalytic domain of F(1) is coupled via a rotary mechanism of the central stalk subunits to proton translocation. In vivo, can only synthesize ATP although its ATP hydrolase activity can be activated artificially in vitro. With the central stalk subunit delta, is essential for the biogenesis of F(1) catalytic part of the ATP synthase complex namely in the formation of F1 assembly intermediate. In Dictyostelium discoideum (Social amoeba), this protein is ATP synthase F(1) complex subunit gamma, mitochondrial.